A 921-amino-acid polypeptide reads, in one-letter code: DNA mismatch repair protein MutS 1 (921 aa).

619-626 (GPNMSGKS) is an ATP binding site. Residues 837–887 (FRDGAAQSGGAAAGSTAEPVATDGDPEHAPGEAAAEGPKGDERAASLDSET) form a disordered region. Residues 840–853 (GAAQSGGAAAGSTA) are compositionally biased toward low complexity.

This sequence belongs to the DNA mismatch repair MutS family.

Its function is as follows. This protein is involved in the repair of mismatches in DNA. It is possible that it carries out the mismatch recognition step. This protein has a weak ATPase activity. The chain is DNA mismatch repair protein MutS 1 from Haloarcula marismortui (strain ATCC 43049 / DSM 3752 / JCM 8966 / VKM B-1809) (Halobacterium marismortui).